The sequence spans 433 residues: Elongation factor 1-alpha (433 aa).

Residues 5–220 (KPHINVVFIG…ALDMLKPPQL (216 aa)) enclose the tr-type G domain. The tract at residues 14–21 (GHVDHGKS) is G1. 14–21 (GHVDHGKS) contacts GTP. S21 provides a ligand contact to Mg(2+). Residues 70-74 (GVTID) are G2. The G3 stretch occupies residues 91 to 94 (DAPG). Residues 91 to 95 (DAPGH) and 146 to 149 (NKMD) contribute to the GTP site. The G4 stretch occupies residues 146-149 (NKMD). The tract at residues 186-188 (ASF) is G5.

The protein belongs to the TRAFAC class translation factor GTPase superfamily. Classic translation factor GTPase family. EF-Tu/EF-1A subfamily.

Its subcellular location is the cytoplasm. It carries out the reaction GTP + H2O = GDP + phosphate + H(+). In terms of biological role, GTP hydrolase that promotes the GTP-dependent binding of aminoacyl-tRNA to the A-site of ribosomes during protein biosynthesis. This chain is Elongation factor 1-alpha, found in Nanoarchaeum equitans (strain Kin4-M).